The sequence spans 146 residues: Ribonuclease H (146 aa).

An RNase H type-1 domain is found at Met-1–Asp-142. Asp-9, Glu-47, Asp-70, and Asp-134 together coordinate Mg(2+).

Belongs to the RNase H family. In terms of assembly, monomer. It depends on Mg(2+) as a cofactor.

It is found in the cytoplasm. The catalysed reaction is Endonucleolytic cleavage to 5'-phosphomonoester.. In terms of biological role, endonuclease that specifically degrades the RNA of RNA-DNA hybrids. The polypeptide is Ribonuclease H (Ruthia magnifica subsp. Calyptogena magnifica).